We begin with the raw amino-acid sequence, 453 residues long: Signal transduction histidine-protein kinase ArlS (453 aa).

The next 2 membrane-spanning stretches (helical) occupy residues 14–34 (ITTL…IFFL) and 157–177 (FVAI…SYIF). One can recognise an HAMP domain in the interval 179 to 232 (TQLTKPLVTMSNKMIQIRRDGFQNKLELKTNYEETDNLIDTFNDMMYQIEESFN). Positions 240 to 453 (DASHELRTPL…QYTTFKIIFK (214 aa)) constitute a Histidine kinase domain. His243 is modified (phosphohistidine; by autocatalysis).

Post-translationally, autophosphorylated.

Its subcellular location is the cell membrane. It carries out the reaction ATP + protein L-histidine = ADP + protein N-phospho-L-histidine.. Functionally, member of the two-component regulatory system ArlS/ArlR. ArlS probably functions as a sensor protein kinase which is autophosphorylated at a histidine residue and transfers its phosphate group to ArlR. This chain is Signal transduction histidine-protein kinase ArlS (arlS), found in Staphylococcus haemolyticus (strain JCSC1435).